An 86-amino-acid polypeptide reads, in one-letter code: Co-chaperonin GroES (86 aa).

The protein belongs to the GroES chaperonin family. In terms of assembly, heptamer of 7 subunits arranged in a ring. Interacts with the chaperonin GroEL.

Its subcellular location is the cytoplasm. In terms of biological role, together with the chaperonin GroEL, plays an essential role in assisting protein folding. The GroEL-GroES system forms a nano-cage that allows encapsulation of the non-native substrate proteins and provides a physical environment optimized to promote and accelerate protein folding. GroES binds to the apical surface of the GroEL ring, thereby capping the opening of the GroEL channel. The protein is Co-chaperonin GroES of Campylobacter concisus (strain 13826).